Here is a 320-residue protein sequence, read N- to C-terminus: Minor outer capsid protein P9 (320 aa).

A disordered region spans residues Arg-297–Gly-320.

It belongs to the phytoreovirus minor outer capsid protein P9 family.

The protein localises to the virion. It is found in the host cytoplasm. Minor outer capsid protein. The polypeptide is Minor outer capsid protein P9 (Rice gall dwarf virus (RGDV)).